A 168-amino-acid polypeptide reads, in one-letter code: Phosphopantetheine adenylyltransferase (168 aa).

Residue T14 coordinates substrate. ATP contacts are provided by residues 14 to 15 and H22; that span reads TF. The substrate site is built by K46, L78, and R92. ATP-binding positions include 93–95, E103, and 128–134; these read GLR and YSFISSS.

Belongs to the bacterial CoaD family. As to quaternary structure, homohexamer. Mg(2+) serves as cofactor.

It localises to the cytoplasm. The enzyme catalyses (R)-4'-phosphopantetheine + ATP + H(+) = 3'-dephospho-CoA + diphosphate. It participates in cofactor biosynthesis; coenzyme A biosynthesis; CoA from (R)-pantothenate: step 4/5. Its function is as follows. Reversibly transfers an adenylyl group from ATP to 4'-phosphopantetheine, yielding dephospho-CoA (dPCoA) and pyrophosphate. The chain is Phosphopantetheine adenylyltransferase from Xanthomonas oryzae pv. oryzae (strain MAFF 311018).